A 449-amino-acid chain; its full sequence is Protein CapK (449 aa).

Its pathway is capsule biogenesis; capsule polysaccharide biosynthesis. Required for the biosynthesis of type 1 capsular polysaccharide. The chain is Protein CapK (capK) from Staphylococcus aureus.